We begin with the raw amino-acid sequence, 302 residues long: UDP-N-acetylenolpyruvoylglucosamine reductase (302 aa).

Residues 32–195 (LGGPADLLAR…VTVTLELVPD (164 aa)) enclose the FAD-binding PCMH-type domain. Arg175 is an active-site residue. Catalysis depends on Ser224, which acts as the Proton donor. Residue Glu294 is part of the active site.

The protein belongs to the MurB family. FAD serves as cofactor.

It localises to the cytoplasm. It catalyses the reaction UDP-N-acetyl-alpha-D-muramate + NADP(+) = UDP-N-acetyl-3-O-(1-carboxyvinyl)-alpha-D-glucosamine + NADPH + H(+). It participates in cell wall biogenesis; peptidoglycan biosynthesis. Functionally, cell wall formation. In Moorella thermoacetica (strain ATCC 39073 / JCM 9320), this protein is UDP-N-acetylenolpyruvoylglucosamine reductase.